A 264-amino-acid chain; its full sequence is Thymidylate synthase (264 aa).

Residue Arg21 coordinates dUMP. Residue His51 coordinates (6R)-5,10-methylene-5,6,7,8-tetrahydrofolate. 126-127 is a dUMP binding site; the sequence is RR. Cys146 (nucleophile) is an active-site residue. Residues 166 to 169, Asn177, and 207 to 209 each bind dUMP; these read RSAD and HLY. (6R)-5,10-methylene-5,6,7,8-tetrahydrofolate is bound at residue Asp169. Ala263 is a binding site for (6R)-5,10-methylene-5,6,7,8-tetrahydrofolate.

This sequence belongs to the thymidylate synthase family. Bacterial-type ThyA subfamily. As to quaternary structure, homodimer.

The protein resides in the cytoplasm. The enzyme catalyses dUMP + (6R)-5,10-methylene-5,6,7,8-tetrahydrofolate = 7,8-dihydrofolate + dTMP. Its pathway is pyrimidine metabolism; dTTP biosynthesis. Catalyzes the reductive methylation of 2'-deoxyuridine-5'-monophosphate (dUMP) to 2'-deoxythymidine-5'-monophosphate (dTMP) while utilizing 5,10-methylenetetrahydrofolate (mTHF) as the methyl donor and reductant in the reaction, yielding dihydrofolate (DHF) as a by-product. This enzymatic reaction provides an intracellular de novo source of dTMP, an essential precursor for DNA biosynthesis. This chain is Thymidylate synthase, found in Hyphomonas neptunium (strain ATCC 15444).